A 260-amino-acid polypeptide reads, in one-letter code: Sphinganine C4-monooxygenase 1 (260 aa).

3 helical membrane-spanning segments follow: residues Leu-11–Leu-31, Ser-55–Phe-75, and Phe-92–Phe-112. The Fatty acid hydroxylase domain maps to Phe-99–Thr-235. Positions His-114–His-118 match the Histidine box-1 motif. Residues His-128–His-132 carry the Histidine box-2 motif. The Histidine box-3 motif lies at Tyr-207–Gln-213.

Belongs to the sterol desaturase family. It depends on Fe cation as a cofactor. In terms of tissue distribution, ubiquitous, with higher levels in flowers and roots.

It is found in the endoplasmic reticulum membrane. The catalysed reaction is a dihydroceramide + 2 Fe(II)-[cytochrome b5] + O2 + 2 H(+) = a phytoceramide + 2 Fe(III)-[cytochrome b5] + H2O. It participates in membrane lipid metabolism; sphingolipid biosynthesis. In terms of biological role, involved in sphingolipid trihydroxy long-chain base (4-hydroxysphinganine) biosynthesis. Can use C18- and C20-sphinganine as substrates to produce C18- and C20-phytosphinganines (D-ribo-2-amino-1,3,4-trihydroxyoctadecane and -eicosane). This Arabidopsis thaliana (Mouse-ear cress) protein is Sphinganine C4-monooxygenase 1 (SBH1).